Here is a 640-residue protein sequence, read N- to C-terminus: RAP domain-containing protein, chloroplastic (640 aa).

Residues 1–32 (MEAALLRPPPLAARGGVSIAIAFSVSRLPSAA) constitute a chloroplast transit peptide. The interval 111–158 (SLQRMVASPKKKNKKKKSKKTNLKQKKAAEPKPPRDTDDDEDDEEEAD) is disordered. The span at 119–136 (PKKKNKKKKSKKTNLKQK) shows a compositional bias: basic residues. Residues 137 to 146 (KAAEPKPPRD) are compositionally biased toward basic and acidic residues. A compositionally biased stretch (acidic residues) spans 147–158 (TDDDEDDEEEAD). One can recognise an RAP domain in the interval 575 to 633 (LAFEIDGPSHFSRNLGTPLGHTAFKRRYIAAAGWNLVSLSHQEWENLEGEFEQLEYLRR).

In terms of tissue distribution, expressed in roots, leaf sheaths, veins of leaf blade, mature leaves, endodermis of culm, panicles and anthers.

It localises to the plastid. The protein localises to the chloroplast. Its function is as follows. Probable RNA-binding protein that plays an essential role in chloroplast development. Regulates the ribosomal proteins homeostasis and ribosomal RNA development in chloroplasts. Involved the regulation of 16S rRNA and required for the expression of chloroplast-associated photosynthetic genes. This is RAP domain-containing protein, chloroplastic from Oryza sativa subsp. japonica (Rice).